We begin with the raw amino-acid sequence, 445 residues long: MRLFGTDGVRGKAGEFLDSFLAMRLAMAAGIYFKDKSITNNILVGKDTRRSGYMIENAIVSGLTSIGYNVIQIGPMPTPAIAFLTEDMRCDAGIMISASHNPYYDNGIKFFDAHGNKLSEDIEKKIEEIYFDDKLIQASKVDMEKIGQAKRIDDVIGRYIVSIKNSFPKDLTLKSLRVVLDVAHGAAYKVAPTVFKELGAEVIVMSDKPNGLNINENCGALHPVNLAAEVKRLRADVGFAFDGDADRLVVVDEKGEVANGDSLLGVLALYLKEQGKLQSSVVATIMSNGALKEFLNKHGIELDTCNVGDKYVLEKLKANGGNFGGEQSGHIIFSDYAKTGDGLIAALQFSALMLSKKKSASSILGQVKPYPQLLINLKIAEKKDLDKIKGLKELKKDLENKNINTLFRYSGTENLIRLLLEARDIKLLEKEMKNVVEFFKKALNG.

Ser-99 acts as the Phosphoserine intermediate in catalysis. Mg(2+) contacts are provided by Ser-99, Asp-242, Asp-244, and Asp-246. Ser-99 bears the Phosphoserine mark.

It belongs to the phosphohexose mutase family. Mg(2+) serves as cofactor. In terms of processing, activated by phosphorylation.

It catalyses the reaction alpha-D-glucosamine 1-phosphate = D-glucosamine 6-phosphate. Functionally, catalyzes the conversion of glucosamine-6-phosphate to glucosamine-1-phosphate. This is Phosphoglucosamine mutase from Campylobacter jejuni (strain RM1221).